Reading from the N-terminus, the 520-residue chain is uncharacterized protein (520 aa).

The next 9 helical transmembrane spans lie at 38 to 58 (VVLI…IPGG), 84 to 104 (IAIY…GIFN), 105 to 125 (IGIS…ILKV), 138 to 158 (IITV…VATL), 167 to 187 (VVSA…LVET), 220 to 240 (FGWL…AVVL), 271 to 291 (FLSF…VYTA), 318 to 338 (IAIG…SVLI), and 355 to 375 (ASLV…MVYF).

The protein resides in the cell membrane. This is an uncharacterized protein from Mycoplasma genitalium (strain ATCC 33530 / DSM 19775 / NCTC 10195 / G37) (Mycoplasmoides genitalium).